The chain runs to 197 residues: LexA repressor (197 aa).

Positions 28–47 form a DNA-binding region, H-T-H motif; it reads VREIARRFRITPRGALLHLI. Catalysis depends on for autocatalytic cleavage activity residues S119 and K156.

The protein belongs to the peptidase S24 family. In terms of assembly, homodimer.

The catalysed reaction is Hydrolysis of Ala-|-Gly bond in repressor LexA.. Functionally, represses a number of genes involved in the response to DNA damage (SOS response), including recA and lexA. In the presence of single-stranded DNA, RecA interacts with LexA causing an autocatalytic cleavage which disrupts the DNA-binding part of LexA, leading to derepression of the SOS regulon and eventually DNA repair. The chain is LexA repressor from Thermotoga petrophila (strain ATCC BAA-488 / DSM 13995 / JCM 10881 / RKU-1).